Consider the following 1185-residue polypeptide: Adhesion G-protein coupled receptor G6 (1185 aa).

The N-terminal stretch at 1–32 (MISFISGRWWRWKFQNTLAVFLLLICLSTSVA) is a signal peptide. Over 33-849 (QSCQSSTSCN…AELIDEKNNR (817 aa)) the chain is Extracellular. A disulfide bond links C41 and C67. The 109-residue stretch at 41-149 (CNVVLTDSQG…KGFHISYKQV (109 aa)) folds into the CUB domain. A mediates interaction with type IV collagen region spans residues 41-354 (CNVVLTDSQG…SSTQTDSTLS (314 aa)). The tract at residues 41-839 (CNVVLTDSQG…FGILMDVSRA (799 aa)) is inhibits receptor signaling in absence of type IV collagen. N-linked (GlcNAc...) asparagine glycosylation occurs at N68. The Ca(2+) site is built by E89 and D97. C94 and C111 are joined by a disulfide. N121 is a glycosylation site (N-linked (GlcNAc...) asparagine). D134, S136, and V137 together coordinate Ca(2+). The 202-residue stretch at 154 to 355 (RNQKVTMPKS…STQTDSTLSC (202 aa)) folds into the Pentraxin (PTX) domain. 3 cysteine pairs are disulfide-bonded: C185-C248, C229-C271, and C369-C375. N-linked (GlcNAc...) asparagine glycans are attached at residues N395, N429, N470, N539, N550, N562, N565, N613, N680, N691, N719, N763, N799, and N818. 2 cysteine pairs are disulfide-bonded: C508/C544 and C532/C563. A GAIN-B domain is found at 658 to 840 (PSLTISSKNL…GILMDVSRAA (183 aa)). Disulfide bonds link C790-C822 and C809-C824. The GPS stretch occupies residues 790–840 (CVFWDFNLQNYSGGCNSDGCKVGSDSNSNRTVCLCNHLTHFGILMDVSRAA). Residues 829–837 (HFGILMDVS) form a stachel region. The chain crosses the membrane as a helical span at residues 850 to 870 (VLTFITYIGCGISAIFSAATL). The Cytoplasmic segment spans residues 871–886 (LTYIAFEKLRRDYPSK). The helical transmembrane segment at 887–907 (ILMNLSTSLLFLNMVFLLDGW) threads the bilayer. Residues 908–915 (LASYEIKE) are Extracellular-facing. The chain crosses the membrane as a helical span at residues 916–936 (LCVTVAVFLHFFLLTSFTWMG). Topologically, residues 937–957 (LESIHMYIALVKVFNTYIRRY) are cytoplasmic. A helical membrane pass occupies residues 958-978 (ILKFCIVGWGVPAAIVGIVLA). Residues 979–1013 (VSKDSYGKNYYGKGKDGQGTSEFCWILNPVVFYVT) are Extracellular-facing. The helical transmembrane segment at 1014 to 1034 (CVAYFSIIFLMNVAMFIVVMI) threads the bilayer. Residues 1035–1057 (QICGRNGKRSNRTLREDILRNLR) are Cytoplasmic-facing. Residues 1058–1080 (SVVSLTFLLGMTWGFAFFAWGPV) form a helical membrane-spanning segment. Over 1081-1083 (SLA) the chain is Extracellular. Residues 1084–1106 (FMYLFTIFNSLQGLFIFVFHCAL) traverse the membrane as a helical segment. N1092 serves as a coordination point for 17alpha-hydroxyprogesterone. Residues 1107–1185 (KENVQKQWRR…RHSNADSTLQ (79 aa)) are Cytoplasmic-facing. Residues 1138–1160 (NTKKVSSDNLGKSLSSSSFGSTT) form a disordered region. The segment covering 1144–1158 (SDNLGKSLSSSSFGS) has biased composition (low complexity).

The protein belongs to the G-protein coupled receptor 2 family. Adhesion G-protein coupled receptor (ADGR) subfamily. Autoproteolytically processed at the GPS region of the GAIN-B domain; this cleavage modulates receptor activity. Expressed in Schwann cells of the posterior lateral line nerve and in brain.

The protein resides in the cell membrane. Its activity is regulated as follows. Forms a heterodimer of 2 chains generated by proteolytic processing that remain associated through non-covalent interactions mediated by the GAIN-B domain. In the inactivated receptor, the Stachel sequence (also named stalk) is embedded in the GAIN-B domain, where it adopts a beta-strand conformation. On activation, the Stachel moves into the 7 transmembrane region and adopts a twisted hook-shaped configuration that forms contacts within the receptor, leading to coupling of a G-alpha protein, which activates signaling. The cleaved GAIN-B and N-terminal domains can then dissociate from the rest of the receptor. Its function is as follows. Adhesion G-protein coupled receptor (aGPCR) for steroid hormones, such as progesterone and 17alpha-hydroxyprogesterone (17OHP). Ligand binding causes a conformation change that triggers signaling via guanine nucleotide-binding proteins (G proteins) and modulates the activity of downstream effectors, such as adenylate cyclase. Adgrg6 is coupled to G(i) G alpha proteins and mediates inhibition of adenylate cyclase. Also able to couple to G(q) G proteins. Involved in myelination of the peripheral nervous system: required for differentiation of promyelinating Schwann cells and for normal myelination of axons. G-protein coupled receptor activity can also be activated by type IV collagen, a major constituent of the basement membrane. Also plays a role inner ear development. The protein is Adhesion G-protein coupled receptor G6 (adgrg6) of Danio rerio (Zebrafish).